We begin with the raw amino-acid sequence, 56 residues long: MAVPKKRTSISKKRIRKNIWKRKADWASVKAFSLAKSLSTGNSKSFFVRQINKTKK.

This sequence belongs to the bacterial ribosomal protein bL32 family.

The protein resides in the plastid. It is found in the chloroplast. The chain is Large ribosomal subunit protein bL32c from Platanus occidentalis (Sycamore).